Here is a 389-residue protein sequence, read N- to C-terminus: Type II methyltransferase M1.ScrFI (389 aa).

The HTH cro/C1-type domain occupies 16-71 (IKEKRLRLNMTQKELADAVGMSKNGDRTIRRWENGETCPSQLEISAILRFPEIAPF). The SAM-dependent MTase C5-type domain occupies 79–387 (YKMIDLFAGI…EKMLEVLEKS (309 aa)). Cys149 is a catalytic residue.

Belongs to the class I-like SAM-binding methyltransferase superfamily. C5-methyltransferase family.

The enzyme catalyses a 2'-deoxycytidine in DNA + S-adenosyl-L-methionine = a 5-methyl-2'-deoxycytidine in DNA + S-adenosyl-L-homocysteine + H(+). Its function is as follows. A methylase, recognizes the double-stranded sequence 5'-CCNGG-3', methylates C-2 on both strands, and protects the DNA from cleavage by the ScrFI endonuclease. This is Type II methyltransferase M1.ScrFI (scrFIAM) from Lactococcus lactis subsp. cremoris (Streptococcus cremoris).